We begin with the raw amino-acid sequence, 289 residues long: MLRDLFVKKKKYAAIPSEQVRKDVPDGVMTKCPKCKKIMYTKEVLKNLKVCVNCGYHHPMNAWERLDSILDEGSFREYDKEMVSLNPLEFPDYEEKLESDRKKTELNEAVVTGEGTIDDMLVVVAVMDSRFRMGSMGSVVGEKIARAVEKAYDLQVPFIIFTASGGARMQEGILSLMQMAKTSVALKKHSNAGGLFISVMTHPTTGGVSASFASLGDYNLAEPGALIGFAGRRVIEQTVREKLPEDFQTAEFLLEHGQLDAVVHRDDMRESLRKILEVHQGGEMAVWQS.

The region spanning 28–289 (VMTKCPKCKK…QGGEMAVWQS (262 aa)) is the CoA carboxyltransferase N-terminal domain. Zn(2+)-binding residues include cysteine 32, cysteine 35, cysteine 51, and cysteine 54. The segment at 32–54 (CPKCKKIMYTKEVLKNLKVCVNC) adopts a C4-type zinc-finger fold.

Belongs to the AccD/PCCB family. In terms of assembly, acetyl-CoA carboxylase is a heterohexamer composed of biotin carboxyl carrier protein (AccB), biotin carboxylase (AccC) and two subunits each of ACCase subunit alpha (AccA) and ACCase subunit beta (AccD). The cofactor is Zn(2+).

It localises to the cytoplasm. The enzyme catalyses N(6)-carboxybiotinyl-L-lysyl-[protein] + acetyl-CoA = N(6)-biotinyl-L-lysyl-[protein] + malonyl-CoA. Its pathway is lipid metabolism; malonyl-CoA biosynthesis; malonyl-CoA from acetyl-CoA: step 1/1. Functionally, component of the acetyl coenzyme A carboxylase (ACC) complex. Biotin carboxylase (BC) catalyzes the carboxylation of biotin on its carrier protein (BCCP) and then the CO(2) group is transferred by the transcarboxylase to acetyl-CoA to form malonyl-CoA. This chain is Acetyl-coenzyme A carboxylase carboxyl transferase subunit beta, found in Bacillus thuringiensis subsp. konkukian (strain 97-27).